Reading from the N-terminus, the 615-residue chain is Medium-chain acyl-CoA ligase ACSF2, mitochondrial (615 aa).

The N-terminal 41 residues, 1–41 (MAVYVGMLRLGRLCAGSSGVLGARVALSRSWQEARLQGVRF), are a transit peptide targeting the mitochondrion. K179 is subject to N6-acetyllysine. K182 is subject to N6-acetyllysine; alternate. N6-succinyllysine; alternate is present on K182. 263-271 (TSGTTGSPK) provides a ligand contact to ATP. K340 and K398 each carry N6-acetyllysine. Position 478 is an N6-succinyllysine (K478). Residues D493 and R508 each contribute to the ATP site. K510 is modified (N6-acetyllysine). K544 and K570 each carry N6-acetyllysine; alternate. 2 positions are modified to N6-succinyllysine; alternate: K544 and K570. K599 lines the ATP pocket. Residue K599 is modified to N6-succinyllysine.

Belongs to the ATP-dependent AMP-binding enzyme family.

It localises to the mitochondrion. It carries out the reaction a medium-chain fatty acid + ATP + CoA = a medium-chain fatty acyl-CoA + AMP + diphosphate. The catalysed reaction is octanoate + ATP + CoA = octanoyl-CoA + AMP + diphosphate. Acyl-CoA synthases catalyze the initial reaction in fatty acid metabolism, by forming a thioester with CoA. Has some preference toward medium-chain substrates. Plays a role in adipocyte differentiation. The polypeptide is Medium-chain acyl-CoA ligase ACSF2, mitochondrial (Pongo abelii (Sumatran orangutan)).